The primary structure comprises 486 residues: Pentatricopeptide repeat-containing protein At2g01860 (486 aa).

The interval 111 to 137 is disordered; that stretch reads QKPDKPSRVRPLPLPQPHKLRPLGLPT. PPR repeat units lie at residues 290–321, 327–361, 362–396, 397–431, and 432–466; these read DSSVYVKMILEIAKNPDKYHLVVALLEELKKR, SQQDCTSIMKICVKLGEFELVESLFDWFKASNREP, SVVMYTTMIHSRYSEQKYREAMSVVWEMEESNCLL, DLPAYRVVIKLFVALDDLGRAMRYYSKLKEAGFSP, and TYDIYRDMISVYTASGRLTKCKEICKEVEDAGLRL.

It belongs to the PPR family. P subfamily.

This is Pentatricopeptide repeat-containing protein At2g01860 (EMB975) from Arabidopsis thaliana (Mouse-ear cress).